Consider the following 323-residue polypeptide: Methionyl-tRNA formyltransferase (323 aa).

115-118 is a binding site for (6S)-5,6,7,8-tetrahydrofolate; sequence SLLP.

It belongs to the Fmt family.

It catalyses the reaction L-methionyl-tRNA(fMet) + (6R)-10-formyltetrahydrofolate = N-formyl-L-methionyl-tRNA(fMet) + (6S)-5,6,7,8-tetrahydrofolate + H(+). Attaches a formyl group to the free amino group of methionyl-tRNA(fMet). The formyl group appears to play a dual role in the initiator identity of N-formylmethionyl-tRNA by promoting its recognition by IF2 and preventing the misappropriation of this tRNA by the elongation apparatus. This Lactococcus lactis subsp. cremoris (strain SK11) protein is Methionyl-tRNA formyltransferase.